Here is a 270-residue protein sequence, read N- to C-terminus: Flavin-dependent thymidylate synthase (270 aa).

In terms of domain architecture, ThyX spans 13–218 (GFVRLVDQMG…PLAWAAFEEH (206 aa)). FAD contacts are provided by residues Ser59, 82–84 (RHR), and Glu90. DUMP-binding positions include 79 to 82 (QWFR), 90 to 94 (EISGR), and Arg157. Positions 82–92 (RHRTASVNEIS) match the ThyX motif motif. Residues 173–175 (DLH) and His179 each bind FAD. A dUMP-binding site is contributed by Arg184. Arg184 functions as the Involved in ionization of N3 of dUMP, leading to its activation in the catalytic mechanism.

It belongs to the thymidylate synthase ThyX family. Homotetramer. The cofactor is FAD.

It catalyses the reaction dUMP + (6R)-5,10-methylene-5,6,7,8-tetrahydrofolate + NADPH + H(+) = dTMP + (6S)-5,6,7,8-tetrahydrofolate + NADP(+). It functions in the pathway pyrimidine metabolism; dTTP biosynthesis. Functionally, catalyzes the reductive methylation of 2'-deoxyuridine-5'-monophosphate (dUMP) to 2'-deoxythymidine-5'-monophosphate (dTMP) while utilizing 5,10-methylenetetrahydrofolate (mTHF) as the methyl donor, and NADPH and FADH(2) as the reductant. This chain is Flavin-dependent thymidylate synthase, found in Thermus thermophilus (strain ATCC BAA-163 / DSM 7039 / HB27).